The primary structure comprises 264 residues: 3'-5' ssDNA/RNA exonuclease TatD (264 aa).

A divalent metal cation is bound by residues E92, H128, and H153.

It belongs to the metallo-dependent hydrolases superfamily. TatD-type hydrolase family. TatD subfamily. Monomer. Requires Mg(2+) as cofactor.

It is found in the cytoplasm. Its function is as follows. 3'-5' exonuclease that prefers single-stranded DNA and RNA. May play a role in the H(2)O(2)-induced DNA damage repair. This chain is 3'-5' ssDNA/RNA exonuclease TatD, found in Musicola paradisiaca (strain Ech703) (Dickeya paradisiaca).